Reading from the N-terminus, the 679-residue chain is Glycine--tRNA ligase beta subunit (679 aa).

This sequence belongs to the class-II aminoacyl-tRNA synthetase family. Tetramer of two alpha and two beta subunits.

It localises to the cytoplasm. The enzyme catalyses tRNA(Gly) + glycine + ATP = glycyl-tRNA(Gly) + AMP + diphosphate. The sequence is that of Glycine--tRNA ligase beta subunit from Streptococcus uberis (strain ATCC BAA-854 / 0140J).